Here is a 373-residue protein sequence, read N- to C-terminus: L-threonine 3-dehydrogenase, mitochondrial (373 aa).

Residues 62 to 67, 88 to 90, 106 to 107, tyrosine 195, lysine 199, and isoleucine 225 contribute to the NAD(+) site; these read GGLGQL, DIR, and DI. Tyrosine 195 functions as the Proton donor/acceptor in the catalytic mechanism.

Belongs to the NAD(P)-dependent epimerase/dehydratase family. As to quaternary structure, homodimer.

The protein resides in the mitochondrion. It catalyses the reaction L-threonine + NAD(+) = (2S)-2-amino-3-oxobutanoate + NADH + H(+). It functions in the pathway amino-acid degradation; L-threonine degradation via oxydo-reductase pathway; glycine from L-threonine: step 1/2. In terms of biological role, catalyzes the NAD(+)-dependent oxidation of L-threonine to 2-amino-3-ketobutyrate, mediating L-threonine catabolism. The chain is L-threonine 3-dehydrogenase, mitochondrial from Sus scrofa (Pig).